The primary structure comprises 358 residues: Isopentenyl-diphosphate delta-isomerase (358 aa).

12 to 13 (RK) lines the substrate pocket. FMN is bound by residues 69–71 (AMT), S99, and N128. A substrate-binding site is contributed by Q158. E159 contacts Mg(2+). FMN-binding positions include K190, T220, 267–269 (GIR), and 288–289 (AG).

It belongs to the IPP isomerase type 2 family. In terms of assembly, homooctamer. Dimer of tetramers. The cofactor is FMN. NADPH is required as a cofactor. It depends on Mg(2+) as a cofactor.

It localises to the cytoplasm. It carries out the reaction isopentenyl diphosphate = dimethylallyl diphosphate. Its function is as follows. Involved in the biosynthesis of isoprenoids. Catalyzes the 1,3-allylic rearrangement of the homoallylic substrate isopentenyl (IPP) to its allylic isomer, dimethylallyl diphosphate (DMAPP). The sequence is that of Isopentenyl-diphosphate delta-isomerase from Listeria innocua serovar 6a (strain ATCC BAA-680 / CLIP 11262).